We begin with the raw amino-acid sequence, 344 residues long: Cyclin-G2 (344 aa).

Positions 298-324 (CFDGSESEDSGEDMSCGEESLSSSPPS) are disordered. The segment covering 302–313 (SESEDSGEDMSC) has biased composition (acidic residues).

Belongs to the cyclin family. Cyclin G subfamily. Highest levels in intestine. Intermediate levels in spleen, brain and kidney. Low levels in testis, stomach, pancreas, liver, salivary gland and muscle. According to PubMed:9139721 also abundant in thymus.

The protein resides in the cytoplasm. The protein localises to the nucleus. May play a role in growth regulation and in negative regulation of cell cycle progression. In Mus musculus (Mouse), this protein is Cyclin-G2 (Ccng2).